Reading from the N-terminus, the 418-residue chain is Gamma-glutamyl phosphate reductase (418 aa).

The protein belongs to the gamma-glutamyl phosphate reductase family.

The protein resides in the cytoplasm. The enzyme catalyses L-glutamate 5-semialdehyde + phosphate + NADP(+) = L-glutamyl 5-phosphate + NADPH + H(+). The protein operates within amino-acid biosynthesis; L-proline biosynthesis; L-glutamate 5-semialdehyde from L-glutamate: step 2/2. Functionally, catalyzes the NADPH-dependent reduction of L-glutamate 5-phosphate into L-glutamate 5-semialdehyde and phosphate. The product spontaneously undergoes cyclization to form 1-pyrroline-5-carboxylate. This Parafrankia sp. (strain EAN1pec) protein is Gamma-glutamyl phosphate reductase.